The primary structure comprises 200 residues: MKIGVIAIQGAVSEHIDALRRALKERGMSAEVVAVKHKGVIPECGGIVIPGGESTTLCRLLAREGIAEEIKDASARGVPILGTCAGLIVLSKEGDEQVEKTSQELLGIMDTKVNRNAFGRQRDSFEAELEVEILDSPFTGVFIRAPGIVSCGPEVRVLSRLDDLIIAAEQGNVLALAFHPELTEDLRIHQYFLDKIFKNA.

An L-glutamine-binding site is contributed by 52-54 (GES). Cys84 serves as the catalytic Nucleophile. L-glutamine-binding positions include Arg115 and 143 to 144 (IR). Active-site charge relay system residues include His179 and Glu181.

The protein belongs to the glutaminase PdxT/SNO family. In terms of assembly, in the presence of PdxS, forms a dodecamer of heterodimers. Only shows activity in the heterodimer.

The catalysed reaction is aldehydo-D-ribose 5-phosphate + D-glyceraldehyde 3-phosphate + L-glutamine = pyridoxal 5'-phosphate + L-glutamate + phosphate + 3 H2O + H(+). It catalyses the reaction L-glutamine + H2O = L-glutamate + NH4(+). Its pathway is cofactor biosynthesis; pyridoxal 5'-phosphate biosynthesis. Its function is as follows. Catalyzes the hydrolysis of glutamine to glutamate and ammonia as part of the biosynthesis of pyridoxal 5'-phosphate. The resulting ammonia molecule is channeled to the active site of PdxS. In Methanosarcina barkeri (strain Fusaro / DSM 804), this protein is Pyridoxal 5'-phosphate synthase subunit PdxT.